The following is a 160-amino-acid chain: SsrA-binding protein (160 aa).

Belongs to the SmpB family.

It localises to the cytoplasm. Required for rescue of stalled ribosomes mediated by trans-translation. Binds to transfer-messenger RNA (tmRNA), required for stable association of tmRNA with ribosomes. tmRNA and SmpB together mimic tRNA shape, replacing the anticodon stem-loop with SmpB. tmRNA is encoded by the ssrA gene; the 2 termini fold to resemble tRNA(Ala) and it encodes a 'tag peptide', a short internal open reading frame. During trans-translation Ala-aminoacylated tmRNA acts like a tRNA, entering the A-site of stalled ribosomes, displacing the stalled mRNA. The ribosome then switches to translate the ORF on the tmRNA; the nascent peptide is terminated with the 'tag peptide' encoded by the tmRNA and targeted for degradation. The ribosome is freed to recommence translation, which seems to be the essential function of trans-translation. This chain is SsrA-binding protein, found in Photorhabdus laumondii subsp. laumondii (strain DSM 15139 / CIP 105565 / TT01) (Photorhabdus luminescens subsp. laumondii).